A 453-amino-acid polypeptide reads, in one-letter code: Na(+)/H(+) antiporter NhaA (453 aa).

11 helical membrane passes run 28 to 48, 79 to 99, 115 to 135, 144 to 164, 173 to 193, 196 to 216, 241 to 261, 321 to 341, 355 to 375, 393 to 413, and 424 to 444; these read FLHI…AALI, LHFL…GMEI, ALPL…YFIL, GWAV…ALLG, VFLL…IAVF, GGMD…VLGM, TGAH…VFAP, VAFG…LDGI, VLIA…FLMV, LVGL…TLAF, and LGIL…GFFQ.

Belongs to the NhaA Na(+)/H(+) (TC 2.A.33) antiporter family.

It localises to the cell inner membrane. The enzyme catalyses Na(+)(in) + 2 H(+)(out) = Na(+)(out) + 2 H(+)(in). Functionally, na(+)/H(+) antiporter that extrudes sodium in exchange for external protons. The polypeptide is Na(+)/H(+) antiporter NhaA (Janthinobacterium sp. (strain Marseille) (Minibacterium massiliensis)).